We begin with the raw amino-acid sequence, 433 residues long: Inorganic triphosphatase (433 aa).

One can recognise a CYTH domain in the interval 2 to 202 (AQEIELKFIV…ARGYHLAQGN (201 aa)). One can recognise a CHAD domain in the interval 218-433 (KADVEQGLEA…EPFWLHSGKR (216 aa)).

It carries out the reaction triphosphate + H2O = phosphate + diphosphate. Inhibited by calcium ion and activated by magnesium ion. Its function is as follows. Involved in the hydrolysis of the beta-gamma-phosphoanhydride linkage of triphosphate-containing substrates (inorganic or nucleoside-linked). Catalyzes the hydrolysis of inorganic triphosphate (PPPi), which could be cytotoxic because of its high affinity for calcium ion, thereby interfering with calcium signaling. It also hydrolyzes slowly thiamine triphosphate (ThTP). YgiF is a specific PPPase, but it contributes only marginally to the total PPPase activity in E.coli, where the main enzyme responsible for hydrolysis of PPPi is inorganic pyrophosphatase (PPase). This is Inorganic triphosphatase (ygiF) from Escherichia coli (strain K12).